Consider the following 302-residue polypeptide: Bifunctional protein FolD (302 aa).

Residues 165 to 167, serine 190, and isoleucine 231 each bind NADP(+); that span reads GRS.

It belongs to the tetrahydrofolate dehydrogenase/cyclohydrolase family. In terms of assembly, homodimer.

The catalysed reaction is (6R)-5,10-methylene-5,6,7,8-tetrahydrofolate + NADP(+) = (6R)-5,10-methenyltetrahydrofolate + NADPH. It catalyses the reaction (6R)-5,10-methenyltetrahydrofolate + H2O = (6R)-10-formyltetrahydrofolate + H(+). It functions in the pathway one-carbon metabolism; tetrahydrofolate interconversion. Catalyzes the oxidation of 5,10-methylenetetrahydrofolate to 5,10-methenyltetrahydrofolate and then the hydrolysis of 5,10-methenyltetrahydrofolate to 10-formyltetrahydrofolate. This is Bifunctional protein FolD from Prochlorococcus marinus (strain MIT 9303).